Consider the following 641-residue polypeptide: MGPPLKLFKNQKYQELKQDCMKDGRLFCDPTFLPENDSLFFNRLLPGKVVWKRPQDISDDPHLIVGNISNHQLIQGRLGNKAMISAFSCLAVQESHWTKAIPNHKEQEWDPRKPEKYAGIFRFRFWHFGEWTEVVIDDLLPTINGDLVFSFSTSMNEFWNALLEKAYAKLLGCYEALDGLTITDIIMDFTGTLAEIIDMQKGRYTDLVEEKYKLFGELYKTFTKGGLISCSIESPSQEEQEVETDWGLLKGYTYTMTDIRKLRLGERLVEVFSTEKLYMVRLRNPLGRQEWSGPWSEISEEWQQLTVTDRKNLGLVMSDDGEFWMSLEDFCHNFHKLNVCRNVNNPVFGRKELESVVGCWTVDDDPLMNRSGGCYNNRDTFLQNPQYIFTVPEDGHKVIMSLQQKDLRTYRRMGRPDNYIIGFELFKVEMNRRFRLHHLYIQERAGTSTYIDTRTVFLSKYLKKGNYVLVPTMFQHGRTSEFLLRIFSEVPVQLRELTLDMPKMSCWNLARGYPKVVTQITVHSAEGLEKKYANETVNPYLTIKCGKEEVRSPVQKNTVHAIFDTQAIFYRRTTDIPIIIQVWNSRKFCDQFLGQVTLDADPSDCRDLKSLYLRKKGGPTAKVKQGHISFKVISSDDLTEL.

The Calpain catalytic domain occupies Leu-26–Val-343. Positions Asn-344–Arg-495 are domain III. The region spanning Thr-498–Ala-621 is the C2 domain.

It belongs to the peptidase C2 family. Interacts (via domain III) with microtubules. Interacts (via domain II) with ARHGEF2 (via the N-terminal zinc finger).

The protein localises to the cytoplasm. It is found in the perinuclear region. It localises to the cytoskeleton. Its subcellular location is the spindle. In terms of biological role, microtubule-stabilizing protein that may be involved in the regulation of microtubule dynamics and cytoskeletal organization. May act as a regulator of RAC1 activity through interaction with ARHGEF2 to control lamellipodial formation and cell mobility. Does not seem to have protease activity as it has lost the active site residues. The protein is Calpain-6 (Capn6) of Rattus norvegicus (Rat).